Here is a 308-residue protein sequence, read N- to C-terminus: UDP-N-acetylenolpyruvoylglucosamine reductase (308 aa).

In terms of domain architecture, FAD-binding PCMH-type spans 22–185 (RVGGPADWLF…TEATFRAEAG (164 aa)). Arg165 is an active-site residue. Over residues 197–211 (QIARRDSSQPTKERS) the composition is skewed to basic and acidic residues. The interval 197–228 (QIARRDSSQPTKERSAGSTFRNPAGFSSTGRA) is disordered. Polar residues predominate over residues 212–226 (AGSTFRNPAGFSSTG). Ser214 (proton donor) is an active-site residue. The active site involves Glu296.

This sequence belongs to the MurB family. Requires FAD as cofactor.

It is found in the cytoplasm. The catalysed reaction is UDP-N-acetyl-alpha-D-muramate + NADP(+) = UDP-N-acetyl-3-O-(1-carboxyvinyl)-alpha-D-glucosamine + NADPH + H(+). Its pathway is cell wall biogenesis; peptidoglycan biosynthesis. Functionally, cell wall formation. This Cereibacter sphaeroides (strain ATCC 17029 / ATH 2.4.9) (Rhodobacter sphaeroides) protein is UDP-N-acetylenolpyruvoylglucosamine reductase.